A 38-amino-acid chain; its full sequence is Large ribosomal subunit protein bL36 (38 aa).

Belongs to the bacterial ribosomal protein bL36 family.

This Porphyromonas gingivalis (strain ATCC 33277 / DSM 20709 / CIP 103683 / JCM 12257 / NCTC 11834 / 2561) protein is Large ribosomal subunit protein bL36.